A 47-amino-acid polypeptide reads, in one-letter code: Putative heat shock protein HSP90 (47 aa).

Position 47 (R47) interacts with ATP.

Belongs to the heat shock protein 90 family. In terms of assembly, homodimer.

It is found in the cytoplasm. Its function is as follows. Putative molecular chaperone that may promote the maturation, structural maintenance and proper regulation of specific target proteins. This Populus euphratica (Euphrates poplar) protein is Putative heat shock protein HSP90.